We begin with the raw amino-acid sequence, 239 residues long: Sugar fermentation stimulation protein homolog (239 aa).

It belongs to the SfsA family.

The sequence is that of Sugar fermentation stimulation protein homolog from Mannheimia succiniciproducens (strain KCTC 0769BP / MBEL55E).